Consider the following 107-residue polypeptide: Nucleoid-associated protein A1G_07310 (107 aa).

It belongs to the YbaB/EbfC family. Homodimer.

The protein localises to the cytoplasm. The protein resides in the nucleoid. Its function is as follows. Binds to DNA and alters its conformation. May be involved in regulation of gene expression, nucleoid organization and DNA protection. This is Nucleoid-associated protein A1G_07310 from Rickettsia rickettsii (strain Sheila Smith).